We begin with the raw amino-acid sequence, 222 residues long: V-type ATP synthase subunit D (222 aa).

The protein belongs to the V-ATPase D subunit family.

Its function is as follows. Produces ATP from ADP in the presence of a proton gradient across the membrane. The chain is V-type ATP synthase subunit D from Clostridioides difficile (strain 630) (Peptoclostridium difficile).